Reading from the N-terminus, the 2772-residue chain is Protein DDB_G0276689 (2772 aa).

Disordered stretches follow at residues 50-82 (QQLK…NNNN), 371-415 (NLET…NGKS), 475-514 (LDIN…KNNL), 612-650 (NKNN…NNNE), 685-708 (LRGS…DSSL), and 933-982 (LVNN…NNSN). Low complexity-rich tracts occupy residues 376 to 412 (NNNN…NNNN), 478 to 514 (NSKN…KNNL), 614 to 649 (NNNN…NNNN), and 688 to 708 (SFSP…DSSL). Residues 1065–1089 (LSKWILNLDDNNYNHIPFMSLVLMP) form an LRR 1 repeat. The tract at residues 1282-1319 (NNNNIDNNNNNNNNNNNNNNNNNNNNNNNNNNNNNNNN) is disordered. LRR repeat units lie at residues 1393-1416 (LSNL…TPKN) and 1543-1567 (HKDV…SFSN). Low complexity predominate over residues 1587–1619 (QNNNYNNNNYNNNYNNNNNNNNNNNNNNNNNNN). The segment at 1587 to 1622 (QNNNYNNNNYNNNYNNNNNNNNNNNNNNNNNNNIDN) is disordered. The stretch at 1899–1922 (LEELTKQEIGYQVLLVLPTDLQVE) is one LRR 4 repeat. Composition is skewed to polar residues over residues 1999 to 2011 (YVSN…NDQI) and 2073 to 2083 (LNIVHSTSPNS). Disordered regions lie at residues 1999 to 2021 (YVSN…KDKK), 2054 to 2083 (EISN…SPNS), and 2367 to 2386 (NNSS…NNNN). One copy of the LRR 5 repeat lies at 2414–2439 (TTIINNIEMDKNRLDEAIYYLKKYGN).

This Dictyostelium discoideum (Social amoeba) protein is Protein DDB_G0276689.